We begin with the raw amino-acid sequence, 125 residues long: Large ribosomal subunit protein eL32 (125 aa).

Belongs to the eukaryotic ribosomal protein eL32 family.

The protein is Large ribosomal subunit protein eL32 (rpl32e) of Sulfolobus acidocaldarius (strain ATCC 33909 / DSM 639 / JCM 8929 / NBRC 15157 / NCIMB 11770).